Consider the following 506-residue polypeptide: ATP synthase subunit alpha (506 aa).

170–177 (GDRQTGKT) provides a ligand contact to ATP.

It belongs to the ATPase alpha/beta chains family. F-type ATPases have 2 components, CF(1) - the catalytic core - and CF(0) - the membrane proton channel. CF(1) has five subunits: alpha(3), beta(3), gamma(1), delta(1), epsilon(1). CF(0) has four main subunits: a(1), b(1), b'(1) and c(9-12).

The protein resides in the cellular thylakoid membrane. It catalyses the reaction ATP + H2O + 4 H(+)(in) = ADP + phosphate + 5 H(+)(out). In terms of biological role, produces ATP from ADP in the presence of a proton gradient across the membrane. The alpha chain is a regulatory subunit. The sequence is that of ATP synthase subunit alpha from Parasynechococcus marenigrum (strain WH8102).